Here is a 260-residue protein sequence, read N- to C-terminus: Methyl-coenzyme M reductase subunit gamma (260 aa).

Position 123 (arginine 123) interacts with coenzyme M.

It belongs to the methyl-coenzyme M reductase gamma subunit family. MCR is a hexamer of two alpha, two beta, and two gamma chains, forming a dimer of heterotrimers. Requires coenzyme F430 as cofactor.

It is found in the cytoplasm. It catalyses the reaction coenzyme B + methyl-coenzyme M = methane + coenzyme M-coenzyme B heterodisulfide. It participates in one-carbon metabolism; methyl-coenzyme M reduction; methane from methyl-coenzyme M: step 1/1. Component of the methyl-coenzyme M reductase (MCR) I that catalyzes the reductive cleavage of methyl-coenzyme M (CoM-S-CH3 or 2-(methylthio)ethanesulfonate) using coenzyme B (CoB or 7-mercaptoheptanoylthreonine phosphate) as reductant which results in the production of methane and the mixed heterodisulfide of CoB and CoM (CoM-S-S-CoB). This is the final step in methanogenesis. The sequence is that of Methyl-coenzyme M reductase subunit gamma (mcrG) from Methanococcus vannielii.